The chain runs to 240 residues: Probable transcriptional regulatory protein OEOE_0768 (240 aa).

The disordered stretch occupies residues 1–21; the sequence is MSGHSKWHNIQGRKNAQDAKR.

Belongs to the TACO1 family.

The protein localises to the cytoplasm. The polypeptide is Probable transcriptional regulatory protein OEOE_0768 (Oenococcus oeni (strain ATCC BAA-331 / PSU-1)).